A 442-amino-acid polypeptide reads, in one-letter code: ATP-dependent RNA helicase SUB2 (442 aa).

The Q motif motif lies at 59–87 (TGFRDFLLKPELLRAISDLGFEHPSEVQQ). The region spanning 90–265 (IPQAILGTDV…KKFMQSPLEI (176 aa)) is the Helicase ATP-binding domain. Residue 103-110 (AKSGMGKT) coordinates ATP. Residues 212-215 (DECD) carry the DECD box motif. In terms of domain architecture, Helicase C-terminal spans 277-438 (GLQQFYLKLE…TLPETVDPAT (162 aa)).

This sequence belongs to the DEAD box helicase family. DECD subfamily.

It localises to the nucleus. It carries out the reaction ATP + H2O = ADP + phosphate + H(+). Functionally, ATP-binding RNA helicase involved in transcription elongation and required for the export of mRNA out of the nucleus. SUB2 also plays a role in pre-mRNA splicing and spliceosome assembly. May be involved in rDNA and telomeric silencing, and maintenance of genome integrity. This is ATP-dependent RNA helicase SUB2 (SUB2) from Cryptococcus neoformans var. neoformans serotype D (strain JEC21 / ATCC MYA-565) (Filobasidiella neoformans).